The chain runs to 201 residues: MAQINVIGKNGGRTIDLELPEVNAAILHDVVTWQLASRRRGTASTKTRAQVSKSGKKMYSQKGTGNARHGDRGVPTFVGGGVAFGPKPRSYGYTLPRKVRQLGLAMALADRQDGGKLIAVDGFDLDGKTKSFVSWAAQNGLDGSERVLIVTDDAQTRQSARNVAWATVLPVAGLNAYDILRHDRLVIDAVALEPAQEEVEQ.

Residues 39–72 (RRGTASTKTRAQVSKSGKKMYSQKGTGNARHGDR) form a disordered region. Positions 42 to 53 (TASTKTRAQVSK) are enriched in polar residues.

Belongs to the universal ribosomal protein uL4 family. Part of the 50S ribosomal subunit.

Functionally, one of the primary rRNA binding proteins, this protein initially binds near the 5'-end of the 23S rRNA. It is important during the early stages of 50S assembly. It makes multiple contacts with different domains of the 23S rRNA in the assembled 50S subunit and ribosome. Its function is as follows. Forms part of the polypeptide exit tunnel. The polypeptide is Large ribosomal subunit protein uL4 (Deinococcus deserti (strain DSM 17065 / CIP 109153 / LMG 22923 / VCD115)).